Reading from the N-terminus, the 150-residue chain is Large ribosomal subunit protein bL9 (150 aa).

The protein belongs to the bacterial ribosomal protein bL9 family.

Binds to the 23S rRNA. This is Large ribosomal subunit protein bL9 from Limosilactobacillus fermentum (strain NBRC 3956 / LMG 18251) (Lactobacillus fermentum).